Here is a 360-residue protein sequence, read N- to C-terminus: S-adenosylmethionine:tRNA ribosyltransferase-isomerase (360 aa).

It belongs to the QueA family. As to quaternary structure, monomer.

The protein resides in the cytoplasm. The enzyme catalyses 7-aminomethyl-7-carbaguanosine(34) in tRNA + S-adenosyl-L-methionine = epoxyqueuosine(34) in tRNA + adenine + L-methionine + 2 H(+). It functions in the pathway tRNA modification; tRNA-queuosine biosynthesis. Functionally, transfers and isomerizes the ribose moiety from AdoMet to the 7-aminomethyl group of 7-deazaguanine (preQ1-tRNA) to give epoxyqueuosine (oQ-tRNA). In Burkholderia pseudomallei (strain K96243), this protein is S-adenosylmethionine:tRNA ribosyltransferase-isomerase.